The following is a 107-amino-acid chain: Large ribosomal subunit protein P1 (107 aa).

Residues 67–107 form a disordered region; that stretch reads GAAPAAAAPAAGGAPAAGAAPKKEEKKEPSEEEDMGFSLFD. Residues 69–86 show a composition bias toward low complexity; the sequence is APAAAAPAAGGAPAAGAA.

It belongs to the eukaryotic ribosomal protein P1/P2 family. In terms of assembly, P1 and P2 exist as dimers at the large ribosomal subunit.

In terms of biological role, plays an important role in the elongation step of protein synthesis. This is Large ribosomal subunit protein P1 from Chlamydomonas reinhardtii (Chlamydomonas smithii).